The chain runs to 97 residues: Cell division protein FtsL (97 aa).

Topologically, residues 1–11 (MSRLFVKRLPT) are cytoplasmic. A helical membrane pass occupies residues 12 to 32 (GSFLMLLLYIGLLLSAIAVAY). The Periplasmic portion of the chain corresponds to 33 to 97 (STYWNRQLLN…DPAEVRMVAP (65 aa)).

The protein belongs to the FtsL family. As to quaternary structure, part of a complex composed of FtsB, FtsL and FtsQ.

The protein resides in the cell inner membrane. Its function is as follows. Essential cell division protein. May link together the upstream cell division proteins, which are predominantly cytoplasmic, with the downstream cell division proteins, which are predominantly periplasmic. The polypeptide is Cell division protein FtsL (Pseudomonas aeruginosa (strain ATCC 15692 / DSM 22644 / CIP 104116 / JCM 14847 / LMG 12228 / 1C / PRS 101 / PAO1)).